A 262-amino-acid polypeptide reads, in one-letter code: Nurim (262 aa).

The Nuclear segment spans residues 1–4 (MAPA). Residues 5–28 (LLLVPAALASFILAFGTGVEFVRF) form a helical membrane-spanning segment. The Perinuclear space segment spans residues 29–58 (TSLRPLLGGIPESGGPDARHGWLAALQDRS). A helical transmembrane segment spans residues 59–80 (ILASLAWDLCLLLLFVVQHSLM). Topologically, residues 81-97 (ATEAVKAWTSRYFGVLQ) are nuclear. Residues 98–114 (RSLYVACTALALQLVMR) traverse the membrane as a helical segment. Residues 115–133 (YWETTPRGPVLWEARAEPW) lie on the Perinuclear space side of the membrane. A helical transmembrane segment spans residues 134 to 164 (ATWVPLLCFVLHVVSWLLIFSILLVFDYAEL). The Nuclear segment spans residues 165 to 191 (MGLKQVYYHVLGLGEPLSLKSPRALRL). Residues 192 to 210 (FSHLRHPVCVELLTVLWVV) traverse the membrane as a helical segment. At 211 to 216 (PTLGTD) the chain is on the perinuclear space side. Residues 217-234 (RLLLALLFTLYLGLAHGL) traverse the membrane as a helical segment. At 235-262 (DQQDLRYLRSQLQRKLHLLSRPQDGEAE) the chain is on the nuclear side.

Belongs to the nurim family.

It localises to the nucleus inner membrane. The protein is Nurim (Nrm) of Mus musculus (Mouse).